Consider the following 204-residue polypeptide: Large ribosomal subunit protein eL15 (204 aa).

The protein belongs to the eukaryotic ribosomal protein eL15 family. As to quaternary structure, component of the large ribosomal subunit.

The protein resides in the cytoplasm. Component of the large ribosomal subunit. The ribosome is a large ribonucleoprotein complex responsible for the synthesis of proteins in the cell. In Cyprinus carpio (Common carp), this protein is Large ribosomal subunit protein eL15 (rpl15).